Consider the following 1483-residue polypeptide: MMFGNLPDVRKPKEGYKKYLEYFDLRFPRIQEEKHFQSYYYYTYLKQIRISIIFLTSVLFIGTMTAYISPLDISYLPYYDSKNIYYFNYVQPNVTTTSSSTTTTSSTTNSIDSTVENNNFTEADGHLTNYYFPYLANKARDTFILRMITIGLLLFYFIFTFTAKFKRLWKLFTTITLFLVSCIVLIFESDIRTIPGRMVLLFIIIAISSGMTFLPSMLASGGLCLFFFFYFMFYSQIAGKQMVLLSLVLLISWIILMIISRFKEQLFRDKFRTLENLKIQTIRSEKIINQMLPTVVVQRLRLQSSKDQSLETTLENDKELSIKKDEESNLTGKKQSKVVVSPPPPPTAAAPQQQDNEISTPQNSRKIVDPQSPSSLMPGQYSVTDLIVDSYDPVTVLFCEIVNFNALVEKMSSTQVINLLNEVYNSFDRLTDVYGVTKVEHIGNVYMVVGGCPELCPDHAQRVAHMSLGMLSVIRRFGIVQVRIGMHTGPVVGGIIGKKKLSWHLFGDTINTSSRMASHSSIGRIQVSHPVQQLLRPYFLFEDRGKIQVKGKGLMRTFYLVKTKQLDKRYTSIFSSLHREKPYIPPVDISEVSFENQNNTIGKGDDIASGSATGPTHPNIPNSMLSAIPSRVSIEMNPLGGSGSIQKRERKGSIFANVMPPKVLNFLQTGSLTSPQQQPLPQQSNSEETISNSPRLSSTPQSTSTLQHSSSTGALGSLINNNNNNNNNNNNNNNNNNNNNNNNNNNNNNNNNNNNNNNNNNNNNNLPVSLISPISQNTTPTGSLSLPVTEKKKQTVQFGSISRSSSISKGTVGRSPSPALFDGGIEMDDNGGGAGDDFNTMEPNLDLGKGIHGSNVISTNNSKLNKLEKDLTKHYTLDKFKLSFISRGNLVEKEYRNEYILKNWNRILASMLMIVALFGLSGLVDYFFLKLSSISSIVKVEPMPSSSSSSLSSSSSNSMTSSEEKFITLHTIRSEENLIYDIITGVRYGFVFFCLIVIYVVSKFKTFSIRKWIQEVVMVFFIVLAAVLIVLTSVPPLNKIPLDSVILSIEIMFITICYNFSGIKFWYSNIVCAFCIIFIEISKTWKQAYHSRDIYLSHNYYLITAVLINIITSYFEELFNRLNWVHGRLLDKDQRETESLVAEILPADIVKSMKSGRQLIVDEFKNVTIFLSDIVGFTEMAARMSPRQLVETLNQIYSTFDEIAQEFGVLKIATIGDAYFCVSGCPDKDQTDHAFRVANMAIKMLESIKSIRTVDNIPIRMRIGIHTGPVIAGVVGIKMIHYQLWGESVQITQQMESTSRADMIHVSEDTFNILKSKYLFEERPDGIIKKRKIKTYFLLRALTENDPQPEVKTRSVSVSKSNFGGSLQYNQITPTLNLPVSQLIIKDQNEIKNQNDHDNDDENGNENGNESSSSNINEEEEDDDNSNNNNNNEDDESSYEDDQEMNQYLNNSENNKNNNNNSNQINEEDGNWAKNYDGSSESS.

The next 6 membrane-spanning stretches (helical) occupy residues I50 to P70, F143 to A163, L168 to E188, M198 to L218, A219 to G239, and M242 to F262. The interval K323 to L376 is disordered. A compositionally biased stretch (polar residues) spans D355–L376. A Guanylate cyclase 1 domain is found at T395–A517. 2 disordered regions span residues N598–N619 and L672–F838. Positions G610–N619 are enriched in polar residues. 3 stretches are compositionally biased toward low complexity: residues L672–S684, S693–T712, and N720–N765. Over residues S772–L786 the composition is skewed to polar residues. The next 6 helical transmembrane spans lie at I907–F927, I982–S1002, V1016–P1036, I1040–F1060, S1061–I1081, and I1094–Y1114. One can recognise a Guanylate cyclase 2 domain in the interval T1168 to E1296. Residues D1173, I1174, and D1217 each coordinate Mg(2+). Disordered stretches follow at residues Q1348 to Y1369 and N1393 to S1483. Positions R1354–Y1369 are enriched in polar residues. Low complexity predominate over residues N1405–I1416. A compositionally biased stretch (acidic residues) spans N1432–E1444. Over residues N1446–I1465 the composition is skewed to low complexity.

This sequence belongs to the adenylyl cyclase class-4/guanylyl cyclase family. In terms of assembly, homodimer. Mg(2+) serves as cofactor.

The protein localises to the membrane. It catalyses the reaction GTP = 3',5'-cyclic GMP + diphosphate. Its activity is regulated as follows. Activated by guanosine 5'-3-O-(thio)triphosphate (GTPgammaS). Inhibited by calcium. Its function is as follows. Synthesizes cyclic GMP (cGMP) from GTP, after activation by heterotrimeric or monomeric G proteins. Involved in chemotaxis. In Dictyostelium discoideum (Social amoeba), this protein is Guanylyl cyclase, membrane (gca).